The chain runs to 164 residues: Glutamate uptake regulatory protein (164 aa).

The region spanning 5-66 (LDDFDIKILD…LLDPQKIGLG (62 aa)) is the HTH asnC-type domain. The segment at residues 24-43 (MAELSEKTGLSANACWRRIR) is a DNA-binding region (H-T-H motif).

Functionally, represses the secondary, H(+)-coupled glutamate uptake system (Gluemp) genes. The polypeptide is Glutamate uptake regulatory protein (grp) (Zymomonas mobilis subsp. mobilis (strain ATCC 10988 / DSM 424 / LMG 404 / NCIMB 8938 / NRRL B-806 / ZM1)).